The chain runs to 364 residues: tRNA-specific 2-thiouridylase MnmA 1 (364 aa).

ATP is bound by residues 10–17 (GMSGGVDS) and Met36. Catalysis depends on Cys106, which acts as the Nucleophile. Cys106 and Cys204 are disulfide-bonded. Gly130 provides a ligand contact to ATP. Residues 154–156 (KDQ) are interaction with tRNA. Residue Cys204 is the Cysteine persulfide intermediate of the active site. The tract at residues 310-311 (RY) is interaction with tRNA.

This sequence belongs to the MnmA/TRMU family.

It localises to the cytoplasm. The enzyme catalyses S-sulfanyl-L-cysteinyl-[protein] + uridine(34) in tRNA + AH2 + ATP = 2-thiouridine(34) in tRNA + L-cysteinyl-[protein] + A + AMP + diphosphate + H(+). In terms of biological role, catalyzes the 2-thiolation of uridine at the wobble position (U34) of tRNA, leading to the formation of s(2)U34. In Thermoanaerobacter sp. (strain X514), this protein is tRNA-specific 2-thiouridylase MnmA 1.